The sequence spans 695 residues: IQ domain-containing protein E (695 aa).

The interval 29–55 (KAKRKAFHKPPPTSPKSPYLSKPRKVA) is disordered. Coiled-coil stretches lie at residues 157-264 (LHVQ…RLQT), 292-358 (SALL…SSKS), and 387-477 (NKDH…CPEV). Serine 322 carries the phosphoserine modification. Disordered stretches follow at residues 357 to 390 (KSHA…NKDH), 465 to 521 (EMKK…RRDA), 564 to 599 (ASKA…TGSP), and 618 to 695 (RARH…NFPV). Residues 465 to 482 (EMKKEEKEDCPEVPHKAQ) show a composition bias toward basic and acidic residues. 2 IQ domains span residues 542–571 (LDEA…HGSE) and 601–630 (QEEA…RTTT).

As to quaternary structure, component of the EvC complex composed of EFCAB7, IQCE, EVC2 and EVC; built from two subcomplexes, EVC2:EVC and EFCAB7:IQCE. Interacts (via N-terminus) with EFCAB7 (via EF-hands 1 and 2); this interaction anchors the EVC-EVC2 complex in a signaling microdomain at the base of cilia and stimulates the Hedgehog (Hh) pathway. Interacts with EVC2 (via N-terminal end). Interacts with EVC.

The protein localises to the cell projection. Its subcellular location is the cilium membrane. Functionally, component of the EvC complex that positively regulates ciliary Hedgehog (Hh) signaling. Required for proper limb morphogenesis. The sequence is that of IQ domain-containing protein E (IQCE) from Homo sapiens (Human).